Reading from the N-terminus, the 430-residue chain is Sesquiterpene synthase Agr5 (430 aa).

Positions 1–25 (MASSLLEPSLAAIALVILLASVSLS) are cleaved as a signal peptide. N113 carries an N-linked (GlcNAc...) asparagine glycan. D176, N311, S315, and E319 together coordinate Mg(2+). The short motif at 176 to 180 (DEYTD) is the DDXXD motif element. (2E,6E)-farnesyl diphosphate is bound by residues R401 and Y402.

This sequence belongs to the terpene synthase family. Mg(2+) is required as a cofactor.

It carries out the reaction (2E,6E)-farnesyl diphosphate = viridiflorene + diphosphate. Its function is as follows. Terpene cyclase that catalyzes the cyclization of farnesyl diphosphate (FPP) to viridiflorene and viridiflorol. This chain is Sesquiterpene synthase Agr5, found in Cyclocybe aegerita (Black poplar mushroom).